Consider the following 450-residue polypeptide: MLDKLGQNLSDALNKIKNATFVDKKLVKEVIKDIQKALIQSDVNVKLVFNMSKEIERKAIEEAPPKGLSKKEHIVKIVYDELVKLLGETTQKLELDPSKKSVILLIGIQGSGKTTSAAKLARYIQKKGLRPGLIAADVYRPAAYQQLKQLSEKINVPLFGDETRTKTPVDITKEGMEKLKKVDVIIIDTAGRHKEEESLLAEMKEMKDLTNPNEIILVIDGTLGQQAKNQAKAFKESVSEIGSILVTKLDGSAKGGGALSAVAEINAPIKFIGTGEGVDNLEQFDPKKFISRILGLGDLDSLLEKTEDIMDESTEESIDSILKGKFTLIELYAQLETISKMGPMKQILSMIPGMGGNLPKEAAQLTEDKLKRYKIMMDSMTLEEKENPELIKTSRLQRIAKGAGVKQDEIKDLLKYYSTTKNAFGNLKRGKMPKMGGQMGQIMRQLMYKD.

GTP contacts are provided by residues 107-114, 188-192, and 247-250; these read GIQGSGKT, DTAGR, and TKLD.

Belongs to the GTP-binding SRP family. SRP54 subfamily. As to quaternary structure, part of the signal recognition particle protein translocation system, which is composed of SRP and FtsY. Archaeal SRP consists of a 7S RNA molecule of 300 nucleotides and two protein subunits: SRP54 and SRP19.

The protein localises to the cytoplasm. It carries out the reaction GTP + H2O = GDP + phosphate + H(+). In terms of biological role, involved in targeting and insertion of nascent membrane proteins into the cytoplasmic membrane. Binds to the hydrophobic signal sequence of the ribosome-nascent chain (RNC) as it emerges from the ribosomes. The SRP-RNC complex is then targeted to the cytoplasmic membrane where it interacts with the SRP receptor FtsY. This chain is Signal recognition particle 54 kDa protein, found in Methanococcus maripaludis (strain C5 / ATCC BAA-1333).